The primary structure comprises 236 residues: Oligogalacturonate-specific porin KdgM (236 aa).

A signal peptide spans 1–20 (MKIKLLTLAVASLVSVNALA).

This sequence belongs to the oligogalacturonate-specific porin KdgM (TC 1.B.35) family. In terms of assembly, monomer.

It localises to the cell outer membrane. Its function is as follows. Porin specific for oligogalacturonides. Also required for full virulence. This chain is Oligogalacturonate-specific porin KdgM (kdgM), found in Dickeya dadantii (strain 3937) (Erwinia chrysanthemi (strain 3937)).